Consider the following 229-residue polypeptide: MSVSAMFVALQGALTADQDIREEIRKVVQALEQTAREMLTLPQGVHQGAGFQDIPKKCQKAREHFGTVRTQMESLKTKFPADQYYRFHEHWRFVLQRLVFLASFVVYLETETLVTREAVAEILGIEADRERGFHLDIEDYLSGVLTLASELARLAVNSVTAGDYSRPLRISTFINELDSGFRLLNLKNDSLRKRYDGLKYDVKKIEEVVYDLSIRGLNKEATGGAGGEK.

Residues arginine 86–histidine 90 are DNA/RNA binding. The segment at leucine 177 to leucine 198 is leucine-zipper.

Belongs to the translin family. Ring-shaped heterooctamer of six TSN and two TSNAX subunits, DNA/RNA binding occurs inside the ring.

The protein resides in the cytoplasm. The protein localises to the nucleus. Its function is as follows. Exhibits both single-stranded and double-stranded endoribonuclease activity. May act as an activator of RNA-induced silencing complex (RISC) by facilitating endonucleolytic cleavage of the siRNA passenger strand. Functionally, DNA-binding protein that specifically recognizes consensus sequences at the breakpoint junctions in chromosomal translocations, mostly involving immunoglobulin (Ig)/T-cell receptor gene segments. Seems to recognize single-stranded DNA ends generated by staggered breaks occurring at recombination hot spots. The sequence is that of Translin (TSN) from Gallus gallus (Chicken).